Consider the following 100-residue polypeptide: Large ribosomal subunit protein bL21 (100 aa).

Belongs to the bacterial ribosomal protein bL21 family. Part of the 50S ribosomal subunit. Contacts protein L20.

Its function is as follows. This protein binds to 23S rRNA in the presence of protein L20. The sequence is that of Large ribosomal subunit protein bL21 from Corynebacterium jeikeium (strain K411).